Here is a 192-residue protein sequence, read N- to C-terminus: Thymidylate kinase (192 aa).

An ATP-binding site is contributed by G7–S14.

It belongs to the thymidylate kinase family.

It carries out the reaction dTMP + ATP = dTDP + ADP. Functionally, phosphorylation of dTMP to form dTDP in both de novo and salvage pathways of dTTP synthesis. The chain is Thymidylate kinase from Campylobacter jejuni subsp. jejuni serotype O:23/36 (strain 81-176).